A 490-amino-acid chain; its full sequence is Sphingomyelinase (490 aa).

Positions 1-31 (MDYAKRIGQVGALAVVLGVGAAVTTHAIGSA) are cleaved as a signal peptide. Residues 30-49 (SAAPTDPSSSSTDSPVDACS) form a disordered region. The Periplasmic portion of the chain corresponds to 32–136 (APTDPSSSST…FDACDPDGNR (105 aa)). A beta stranded membrane pass occupies residues 137–145 (MTFAVRERG). At 146–161 (APGGPQHGIVTVDQRT) the chain is on the extracellular side. Residues 162-168 (ASFIYTA) traverse the membrane as a beta stranded segment. Topologically, residues 169 to 171 (DPG) are periplasmic. The chain crosses the membrane as a beta stranded span at residues 172–182 (FVGTDTFSVNV). Over 183–187 (SDDTS) the chain is Extracellular. Residues 188–196 (LHVHGLAGY) traverse the membrane as a beta stranded segment. Residues 197–204 (LGPFHGHD) are Periplasmic-facing. The chain crosses the membrane as a beta stranded span at residues 205–213 (DVATVTVFV). Residues 214-490 (GNTPTDTISG…HYVADNVAVR (277 aa)) lie on the Extracellular side of the membrane.

It belongs to the SpmT family.

It localises to the cell outer membrane. It carries out the reaction a sphingomyelin + H2O = phosphocholine + an N-acylsphing-4-enine + H(+). In terms of biological role, catalyzes the cleavage of sphingomyelin, a major lipid in eukaryotic cells, into ceramide and phosphocholine, which are then utilized by M.bovis as carbon, nitrogen and phosphorus sources, respectively. Thus, enables M.bovis to utilize sphingomyelin as a source of several essential nutrients for intracellular growth during infection. Furthermore, lyses erythrocytes and constitutes a hemolytic factor. This is Sphingomyelinase from Mycobacterium bovis (strain ATCC BAA-935 / AF2122/97).